Reading from the N-terminus, the 210-residue chain is Adenylate kinase isoenzyme 1 (210 aa).

An ATP-binding site is contributed by 30 to 35; that stretch reads GSGKGT. The tract at residues 50–79 is NMP; it reads SSGDLLRDEVKSGSPRGAQLTAIMESGALV. AMP contacts are provided by residues Ser-51, Arg-56, 77–79, 107–110, and Gln-114; these read ALV and GYPR. The interval 144–154 is LID; sequence HRAQTSGRADD. An ATP-binding site is contributed by Arg-145. Positions 151 and 162 each coordinate AMP. Gly-190 lines the ATP pocket.

It belongs to the adenylate kinase family. AK1 subfamily. In terms of assembly, monomer.

It localises to the cytoplasm. The catalysed reaction is AMP + ATP = 2 ADP. Its function is as follows. Catalyzes the reversible transfer of the terminal phosphate group between ATP and AMP. Plays an important role in cellular energy homeostasis and in adenine nucleotide metabolism. The protein is Adenylate kinase isoenzyme 1 of Caenorhabditis elegans.